Consider the following 222-residue polypeptide: Extracellular protein ARB_03106 (222 aa).

A signal peptide spans Met-1–Ala-18. N-linked (GlcNAc...) asparagine glycosylation is found at Asn-113 and Asn-126.

It is found in the secreted. The chain is Extracellular protein ARB_03106 from Arthroderma benhamiae (strain ATCC MYA-4681 / CBS 112371) (Trichophyton mentagrophytes).